We begin with the raw amino-acid sequence, 639 residues long: Threonine--tRNA ligase (639 aa).

Residues 1 to 62 (MYQLTLPDKS…ETDANIEVLT (62 aa)) enclose the TGS domain. Residues 246–537 (DHRKIGKELD…LIEHYEGKFP (292 aa)) are catalytic. The Zn(2+) site is built by cysteine 337, histidine 388, and histidine 514.

It belongs to the class-II aminoacyl-tRNA synthetase family. Homodimer. It depends on Zn(2+) as a cofactor.

Its subcellular location is the cytoplasm. It catalyses the reaction tRNA(Thr) + L-threonine + ATP = L-threonyl-tRNA(Thr) + AMP + diphosphate + H(+). Its function is as follows. Catalyzes the attachment of threonine to tRNA(Thr) in a two-step reaction: L-threonine is first activated by ATP to form Thr-AMP and then transferred to the acceptor end of tRNA(Thr). Also edits incorrectly charged L-seryl-tRNA(Thr). The sequence is that of Threonine--tRNA ligase from Leptospira borgpetersenii serovar Hardjo-bovis (strain JB197).